The following is a 485-amino-acid chain: Glutamate--tRNA ligase (485 aa).

A 'HIGH' region motif is present at residues 12-22; sequence PSPTGYMHIGN. The 'KMSKS' region motif lies at 253–257; sequence KLSKR. Lys256 contacts ATP.

Belongs to the class-I aminoacyl-tRNA synthetase family. Glutamate--tRNA ligase type 1 subfamily. Monomer.

The protein localises to the cytoplasm. The enzyme catalyses tRNA(Glu) + L-glutamate + ATP = L-glutamyl-tRNA(Glu) + AMP + diphosphate. Functionally, catalyzes the attachment of glutamate to tRNA(Glu) in a two-step reaction: glutamate is first activated by ATP to form Glu-AMP and then transferred to the acceptor end of tRNA(Glu). This Clostridium acetobutylicum (strain ATCC 824 / DSM 792 / JCM 1419 / IAM 19013 / LMG 5710 / NBRC 13948 / NRRL B-527 / VKM B-1787 / 2291 / W) protein is Glutamate--tRNA ligase.